A 163-amino-acid chain; its full sequence is Nucleotide-binding protein APL_1231 (163 aa).

The protein belongs to the YajQ family.

Functionally, nucleotide-binding protein. The sequence is that of Nucleotide-binding protein APL_1231 from Actinobacillus pleuropneumoniae serotype 5b (strain L20).